A 374-amino-acid chain; its full sequence is Gustatory receptor 23a (374 aa).

Topologically, residues 1–6 (MFPPTR) are cytoplasmic. The chain crosses the membrane as a helical span at residues 7-27 (VQASSRVVLKIFHFILVAFSL). Residues 28 to 36 (RSRRLSRLV) lie on the Extracellular side of the membrane. The chain crosses the membrane as a helical span at residues 37 to 57 (LWLQFLGWLTWFISMWTQSVI). The Cytoplasmic segment spans residues 58–72 (YAQTIDCTLDCSLRH). Residues 73 to 93 (ILTFFQTVSHAFIVVTSFLDG) traverse the membrane as a helical segment. Residues 94–112 (FRIKQDQLDEPIAFEDSDP) are Extracellular-facing. Residues 113–133 (WLAFTVLAMLVPTLGVEYLVC) traverse the membrane as a helical segment. The Cytoplasmic portion of the chain corresponds to 134–226 (SNAPEYAFRI…YNDLHYLFVR (93 aa)). A helical membrane pass occupies residues 227 to 247 (INGYFGGSLLTIIIVHFAIFV). Residues 248–263 (SNSYWLFVDIRTRPWR) are Extracellular-facing. The helical transmembrane segment at 264 to 284 (IYAILLNLGFIFNVALQMAAA) threads the bilayer. At 285 to 343 (CWHCQQSYNLGRQIGCLISKLVKPQGSKLYNDLVSEFSLQTLHQRFVVTAKDFFSLNLH) the chain is on the cytoplasmic side. The helical transmembrane segment at 344–364 (LLSSMFAAVVTYLVILIQFMF) threads the bilayer. Topologically, residues 365–374 (AERSSTRGSG) are extracellular.

This sequence belongs to the insect chemoreceptor superfamily. Gustatory receptor (GR) family. Gr2a subfamily. Expressed in the adult labellar chemosensory neurons and labral sense organ. Expressed in neurons of the dorsal pharyngeal sense organ of larvae.

Its subcellular location is the cell membrane. In terms of biological role, probable gustatory receptor which mediates acceptance or avoidance behavior, depending on its substrates. This is Gustatory receptor 23a (Gr23a) from Drosophila melanogaster (Fruit fly).